Here is a 432-residue protein sequence, read N- to C-terminus: Adenylosuccinate synthetase (432 aa).

GTP-binding positions include 13 to 19 and 41 to 43; these read GDEGKGK and GHT. Aspartate 14 functions as the Proton acceptor in the catalytic mechanism. Aspartate 14 and glycine 41 together coordinate Mg(2+). IMP-binding positions include 14–17, 39–42, threonine 130, arginine 144, glutamine 225, threonine 240, and arginine 304; these read DEGK and NAGH. Residue histidine 42 is the Proton donor of the active site. Substrate is bound at residue 300 to 306; sequence ATTGRKR. GTP contacts are provided by residues arginine 306, 332–334, and 415–417; these read KLD and STG.

The protein belongs to the adenylosuccinate synthetase family. As to quaternary structure, homodimer. Mg(2+) serves as cofactor.

It localises to the cytoplasm. The catalysed reaction is IMP + L-aspartate + GTP = N(6)-(1,2-dicarboxyethyl)-AMP + GDP + phosphate + 2 H(+). It participates in purine metabolism; AMP biosynthesis via de novo pathway; AMP from IMP: step 1/2. Its function is as follows. Plays an important role in the de novo pathway of purine nucleotide biosynthesis. Catalyzes the first committed step in the biosynthesis of AMP from IMP. The chain is Adenylosuccinate synthetase from Vibrio cholerae serotype O1 (strain ATCC 39541 / Classical Ogawa 395 / O395).